We begin with the raw amino-acid sequence, 627 residues long: uncharacterized protein (627 aa).

2 disordered regions span residues 441 to 466 (EAVP…QGEN) and 608 to 627 (DLRG…TEDR). Residues 615-627 (DYERGKGESTEDR) are compositionally biased toward basic and acidic residues.

This is an uncharacterized protein from Homo sapiens (Human).